The primary structure comprises 483 residues: ATP synthase subunit beta (483 aa).

169-176 (GGAGVGKT) contributes to the ATP binding site.

It belongs to the ATPase alpha/beta chains family. F-type ATPases have 2 components, CF(1) - the catalytic core - and CF(0) - the membrane proton channel. CF(1) has five subunits: alpha(3), beta(3), gamma(1), delta(1), epsilon(1). CF(0) has three main subunits: a(1), b(2) and c(9-12). The alpha and beta chains form an alternating ring which encloses part of the gamma chain. CF(1) is attached to CF(0) by a central stalk formed by the gamma and epsilon chains, while a peripheral stalk is formed by the delta and b chains.

It is found in the cell membrane. The catalysed reaction is ATP + H2O + 4 H(+)(in) = ADP + phosphate + 5 H(+)(out). Its function is as follows. Produces ATP from ADP in the presence of a proton gradient across the membrane. The catalytic sites are hosted primarily by the beta subunits. This chain is ATP synthase subunit beta, found in Corynebacterium glutamicum (strain R).